The sequence spans 477 residues: Bifunctional protein HldE (477 aa).

Residues 1–318 (MKVTLPEFER…ENAVRGRADT (318 aa)) form a ribokinase region. At Lys-179 the chain carries N6-acetyllysine. Position 195-198 (195-198 (NLSE)) interacts with ATP. Residue Asp-264 is part of the active site. Residues 344–477 (MTNGVFDILH…IKKIQQDKKG (134 aa)) form a cytidylyltransferase region.

It in the N-terminal section; belongs to the carbohydrate kinase PfkB family. This sequence in the C-terminal section; belongs to the cytidylyltransferase family. In terms of assembly, homodimer.

It carries out the reaction D-glycero-beta-D-manno-heptose 7-phosphate + ATP = D-glycero-beta-D-manno-heptose 1,7-bisphosphate + ADP + H(+). The catalysed reaction is D-glycero-beta-D-manno-heptose 1-phosphate + ATP + H(+) = ADP-D-glycero-beta-D-manno-heptose + diphosphate. Its pathway is nucleotide-sugar biosynthesis; ADP-L-glycero-beta-D-manno-heptose biosynthesis; ADP-L-glycero-beta-D-manno-heptose from D-glycero-beta-D-manno-heptose 7-phosphate: step 1/4. The protein operates within nucleotide-sugar biosynthesis; ADP-L-glycero-beta-D-manno-heptose biosynthesis; ADP-L-glycero-beta-D-manno-heptose from D-glycero-beta-D-manno-heptose 7-phosphate: step 3/4. It functions in the pathway bacterial outer membrane biogenesis; LPS core biosynthesis. Its function is as follows. Catalyzes the phosphorylation of D-glycero-D-manno-heptose 7-phosphate at the C-1 position to selectively form D-glycero-beta-D-manno-heptose-1,7-bisphosphate. Catalyzes the ADP transfer from ATP to D-glycero-beta-D-manno-heptose 1-phosphate, yielding ADP-D-glycero-beta-D-manno-heptose. The polypeptide is Bifunctional protein HldE (Escherichia coli O157:H7).